The following is a 603-amino-acid chain: Serine protease 56 (603 aa).

An N-terminal signal peptide occupies residues 1–19 (MLLAVLLLLPLPSSWFAHG). The segment at 64-96 (SHECRGSGRPRPQALLQDPPEPGPCGERRPSTA) is disordered. A glycan (N-linked (GlcNAc...) asparagine) is linked at Asn97. Residues 105 to 337 (IVGGSAAPPG…FKDWLQEQMS (233 aa)) enclose the Peptidase S1 domain. An intrachain disulfide couples Cys130 to Cys146. Active-site charge relay system residues include His145 and Asp191. 3 cysteine pairs are disulfide-bonded: Cys225–Cys292, Cys256–Cys271, and Cys282–Cys313. The active-site Charge relay system is the Ser286. Disordered regions lie at residues 442–474 (PARELRLHSGSRAAGTRFPKRRPEPRGEANGCP) and 573–603 (EGPWMDVGQGPGLERKGHHPLNPQVPPARQP).

Belongs to the peptidase S1 family. Expressed neural retina, cornea, sclera and optic nerve.

Serine protease required during eye development. The sequence is that of Serine protease 56 (PRSS56) from Homo sapiens (Human).